A 188-amino-acid chain; its full sequence is PRA1 family protein 3 (188 aa).

Met1 bears the N-acetylmethionine mark. Residues 1–35 (MDVNIAPLRAWDDFFPGSDRFARPDFRDISKWNNR) are Cytoplasmic-facing. The next 2 membrane-spanning stretches (helical) occupy residues 36–56 (VVSNLLYYQTNYLVVAAMMIS) and 57–77 (IVGFLSPFNMILGGIVVVLVF). At 78–93 (TGFVWAAHNKDVLRRM) the chain is on the cytoplasmic side. The next 2 membrane-spanning stretches (helical) occupy residues 94-114 (KKRYPTTFVMVVMLASYFLIS) and 115-135 (MFGGVMVFVFGITFPLLLMFI). Residues 103–117 (MVVMLASYFLISMFG) form a required for homodimer formation and heterodimer formation with ARL6IP1 region. At 136–188 (HASLRLRNLKNKLENKMEGIGLKRTPMGIVLDALEQQEEGINRLTDYISKVKE) the chain is on the cytoplasmic side. Residues 136–188 (HASLRLRNLKNKLENKMEGIGLKRTPMGIVLDALEQQEEGINRLTDYISKVKE) form a targeting to endoplasmic reticulum membrane region.

The protein belongs to the PRA1 family. As to quaternary structure, homodimer. Heterodimer with ARL6IP1. Forms multimers. Interacts with ARL6. Interacts with prenylated RAB1A and RAB3A. Interacts with SLC1A1/EAAC1. Interacts with RTN2 (via first transmembrane domain). Does not interact with VAMP1, VAMP2 or VAMP3.

It localises to the endoplasmic reticulum membrane. It is found in the cell membrane. The protein resides in the cytoplasm. Its subcellular location is the cytoskeleton. Regulates intracellular concentrations of taurine and glutamate. Negatively modulates SLC1A1/EAAC1 glutamate transport activity by decreasing its affinity for glutamate in a PKC activity-dependent manner. Plays a role in the retention of SLC1A1/EAAC1 in the endoplasmic reticulum. This chain is PRA1 family protein 3 (ARL6IP5), found in Homo sapiens (Human).